The primary structure comprises 215 residues: MCSSRCLLFLATLAFLIHLSLARATPVSTPAQCLAHSQNLLRTTNHMLEKAIQTLKHYPCTAEDIDHEDITEDKTSTLNACLPPELAKNESCWASGKTSSVTRGSCLPPQKTSSMMTLCLSSIYEDLKMYQTEFKAINAELLDHNRKQIILDENMLTAIDELMQALNLNGETRPQKPSLEEADPYKVKIKLCILLHAFSIRAITINRVMSYLNSA.

The signal sequence occupies residues Met1 to Ala22. 3 disulfides stabilise this stretch: Cys33/Cys106, Cys60/Cys192, and Cys81/Cys119. Residue Asn89 is glycosylated (N-linked (GlcNAc...) asparagine).

It belongs to the IL-6 superfamily. In terms of assembly, heterodimer with IL12B; disulfide-linked. This heterodimer is known as interleukin IL-12. Heterodimer with EBI3/IL27B; not disulfide-linked. This heterodimer is known as interleukin IL-35. Interacts with NBR1; this interaction promotes IL-12 secretion.

The protein localises to the secreted. Functionally, heterodimerizes with IL12B to form the IL-12 cytokine or with EBI3/IL27B to form the IL-35 cytokine. IL-12 is primarily produced by professional antigen-presenting cells (APCs) such as B-cells and dendritic cells (DCs) as well as macrophages and granulocytes and regulates T-cell and natural killer-cell responses, induces the production of interferon-gamma (IFN-gamma), favors the differentiation of T-helper 1 (Th1) cells and is an important link between innate resistance and adaptive immunity. Mechanistically, exerts its biological effects through a receptor composed of IL12R1 and IL12R2 subunits. Binding to the receptor results in the rapid tyrosine phosphorylation of a number of cellular substrates including the JAK family kinases TYK2 and JAK2. In turn, recruited STAT4 gets phosphorylated and translocates to the nucleus where it regulates cytokine/growth factor responsive genes. As part of IL-35, plays essential roles in maintaining the immune homeostasis of the liver microenvironment and also functions as an immune-suppressive cytokine. Mediates biological events through unconventional receptors composed of IL12RB2 and gp130/IL6ST heterodimers or homodimers. Signaling requires the transcription factors STAT1 and STAT4, which form a unique heterodimer that binds to distinct DNA sites. This is Interleukin-12 subunit alpha (IL12A) from Sigmodon hispidus (Hispid cotton rat).